Here is a 406-residue protein sequence, read N- to C-terminus: MIITSLLDTDLYKFTMMQVVLHQFPGAQVEYRFKCRNPGVQLAPYVAEIRGEIRSLCSLQFQDAELDYLRSMRFIKSDFVDFLGLFRLNEKYISVAPRPGGEIDICIRGPWLHTILFEIPVLAIVNEVYFRNTQKVPDFPEGRRRLDAKIALLQAEGLEELKIADYGTRRRFSRAWHEEVLRVLVARLGTGDQCAEAPAGPGQFAGTSNVLYAMKLGVTPLGTMAHEYLQACQALGPRLRDSQVFGFEIWAREYRGDLGIALSDVYGMSAFLRDFDLYFCKLFDGARQDSGDPFAWGERLLAHYRKLRVDPQSKTLIFSDALTVTRTIELYRQFRGRCQLAFGIGTHLTNDLGSPPAHEPLQVVIKMTRCNGQPVAKLADSPGKGMCDDEKYLAYLRQVFDIPAQA.

Residue His226 is modified to Phosphohistidine; by autocatalysis.

It belongs to the NAPRTase family. In terms of processing, transiently phosphorylated on a His residue during the reaction cycle. Phosphorylation strongly increases the affinity for substrates and increases the rate of nicotinate D-ribonucleotide production. Dephosphorylation regenerates the low-affinity form of the enzyme, leading to product release.

It carries out the reaction nicotinate + 5-phospho-alpha-D-ribose 1-diphosphate + ATP + H2O = nicotinate beta-D-ribonucleotide + ADP + phosphate + diphosphate. The protein operates within cofactor biosynthesis; NAD(+) biosynthesis; nicotinate D-ribonucleotide from nicotinate: step 1/1. Its function is as follows. Catalyzes the synthesis of beta-nicotinate D-ribonucleotide from nicotinate and 5-phospho-D-ribose 1-phosphate at the expense of ATP. In Verminephrobacter eiseniae (strain EF01-2), this protein is Nicotinate phosphoribosyltransferase.